The sequence spans 145 residues: Oocyte zinc finger protein XlCOF8.4I (145 aa).

The disordered stretch occupies residues 1-25 (HKREADFCSKGNLTNPEISPVEHYP). The segment at 123–145 (LSCSECGKCFSTYHVLARHQKTH) adopts a C2H2-type zinc-finger fold.

It belongs to the krueppel C2H2-type zinc-finger protein family.

It is found in the nucleus. Functionally, may be involved in transcriptional regulation. The protein is Oocyte zinc finger protein XlCOF8.4I of Xenopus laevis (African clawed frog).